The sequence spans 950 residues: MVFSRRGGLGARDLLLWLLLLAAWEVGSGQLHYSIPEEAKHGTFVGRVAQDLGLELAELVPRLFRVASKTHRDLLEVNLQNGILFVNSRIDREELCQWSAECSIHLELIADRPLQVFHVEVKVKDINDNPPVFRGREQIIFIPESRLLNSRFPIEGAADADIGANALLTYTLSPSDYFSLDVEASDELSKSLWLELRKYLDREETPELHLLLTATDGGKPELQGTVELLITVLDVNDNAPLFDQAVYRVHLLETTANGTLVTTLNASDADEGVNGEVVFSFDSGISRDIQEKFKVDSSSGEIRLIDKLDYEETKSYEIQVKAVDKGSPPMSNHCKVLVKVLDVNDNAPELAVTSLYLPIREDAPLSTVIALITVSDRDSGANGQVTCSLMPHVPFKLVSTFKNYYSLVLDSALDRESLSVYELVVTARDGGSPSLWATARVSVEVADVNDNAPAFAQPEYTVFVKENNPPGCHIFTVSARDADAQENALVSYSLVERRVGERALSNYVSVHAESGKVYALQPLDHEELELLQFQVSARDAGVPPLGSNVTLQVFVLDENDNAPALLAPRVGGTIGAVSELVPRLVGAGHVVAKVRAVDADSGYNAWLSYELQPAAGGARIPFRVGLYTGEISTTRVLDEADLSRYRLLVLVKDHGEPALTATATVLVSLVESGQAPKASSRASVGVAGPEAALVDVNVYLIIAICAVSSLLVLTLLLYTALRCSVPPTEGAYVPGKPTLVCSSALGSWSNSQQRRQRVCSSEGPPKTDLMAFSPGLSPSLNTSERNEQPEANLDLSGNPRQPNPDWRYSASLRAGMHSSVHLEEAGILRAGPGGPDQQWPTVSSATPEPEAGEVSPPVGAGVNSNSWTFKYGPGNPKQSGPGELPDKFIIPGSPAIISIRQEPTNSQIDKSDFITFGKKEETKKKKKKKKGNKTQEKKEKGNSTTDNSDQ.

The N-terminal stretch at 1 to 29 (MVFSRRGGLGARDLLLWLLLLAAWEVGSG) is a signal peptide. 6 Cadherin domains span residues 30–133 (QLHY…PPVF), 157–242 (AADA…APLF), 243–350 (DQAV…APEL), 351–455 (AVTS…APAF), 456–565 (AQPE…APAL), and 588–678 (GHVV…APKA). The Extracellular portion of the chain corresponds to 30-697 (QLHYSIPEEA…GPEAALVDVN (668 aa)). N-linked (GlcNAc...) asparagine glycans are attached at residues N257 and N265. The N-linked (GlcNAc...) asparagine glycan is linked to N548. The helical transmembrane segment at 698–718 (VYLIIAICAVSSLLVLTLLLY) threads the bilayer. Residues 719 to 950 (TALRCSVPPT…GNSTTDNSDQ (232 aa)) lie on the Cytoplasmic side of the membrane. PXXP repeat units lie at residues 734 to 737 (PGKP), 799 to 802 (PRQP), 832 to 835 (PGGP), 873 to 876 (PGNP), and 891 to 894 (PGSP). Residues 734-894 (PGKPTLVCSS…PDKFIIPGSP (161 aa)) form a 5 X 4 AA repeats of P-X-X-P region. Disordered regions lie at residues 752-808 (QQRR…DWRY), 828-856 (LRAG…EVSP), and 871-890 (YGPG…KFII). A disordered region spans residues 900-950 (RQEPTNSQIDKSDFITFGKKEETKKKKKKKKGNKTQEKKEKGNSTTDNSDQ). Basic and acidic residues predominate over residues 909-923 (DKSDFITFGKKEETK).

Its subcellular location is the cell membrane. The protein resides in the secreted. Potential calcium-dependent cell-adhesion protein. May be involved in the establishment and maintenance of specific neuronal connections in the brain. This is Protocadherin alpha-1 (PCDHA1) from Homo sapiens (Human).